We begin with the raw amino-acid sequence, 105 residues long: Cell division protein FtsB (105 aa).

Residues 1-3 (MRL) lie on the Cytoplasmic side of the membrane. The helical transmembrane segment at 4–21 (FTLILMVVLALVQRQLWF) threads the bilayer. The Periplasmic segment spans residues 22–105 (GKNGLVEYRQ…NKQSSLPKSD (84 aa)). Positions 28 to 74 (EYRQVSENLLRRQADNQKLQERNMLLKEDIEDLKSGLEAIEELARND) form a coiled coil.

Belongs to the FtsB family. In terms of assembly, part of a complex composed of FtsB, FtsL and FtsQ.

It localises to the cell inner membrane. Functionally, essential cell division protein. May link together the upstream cell division proteins, which are predominantly cytoplasmic, with the downstream cell division proteins, which are predominantly periplasmic. This is Cell division protein FtsB from Tolumonas auensis (strain DSM 9187 / NBRC 110442 / TA 4).